We begin with the raw amino-acid sequence, 627 residues long: tRNA uridine 5-carboxymethylaminomethyl modification enzyme MnmG (627 aa).

Residues Gly-13–Gly-18, Val-125, and Ser-180 contribute to the FAD site. Gly-274–Phe-288 contacts NAD(+). Gln-371 is an FAD binding site.

Belongs to the MnmG family. In terms of assembly, homodimer. Heterotetramer of two MnmE and two MnmG subunits. It depends on FAD as a cofactor.

It is found in the cytoplasm. In terms of biological role, NAD-binding protein involved in the addition of a carboxymethylaminomethyl (cmnm) group at the wobble position (U34) of certain tRNAs, forming tRNA-cmnm(5)s(2)U34. This is tRNA uridine 5-carboxymethylaminomethyl modification enzyme MnmG from Francisella tularensis subsp. novicida (strain U112).